The sequence spans 627 residues: 1-deoxy-D-xylulose-5-phosphate synthase (627 aa).

Thiamine diphosphate-binding positions include His87 and 128-130; that span reads GHS. Asp159 contributes to the Mg(2+) binding site. Residues 160 to 161, Asn188, Phe295, and Glu375 each bind thiamine diphosphate; that span reads GA. Asn188 provides a ligand contact to Mg(2+).

The protein belongs to the transketolase family. DXPS subfamily. Homodimer. Requires Mg(2+) as cofactor. Thiamine diphosphate serves as cofactor.

It catalyses the reaction D-glyceraldehyde 3-phosphate + pyruvate + H(+) = 1-deoxy-D-xylulose 5-phosphate + CO2. Its pathway is metabolic intermediate biosynthesis; 1-deoxy-D-xylulose 5-phosphate biosynthesis; 1-deoxy-D-xylulose 5-phosphate from D-glyceraldehyde 3-phosphate and pyruvate: step 1/1. Functionally, catalyzes the acyloin condensation reaction between C atoms 2 and 3 of pyruvate and glyceraldehyde 3-phosphate to yield 1-deoxy-D-xylulose-5-phosphate (DXP). The chain is 1-deoxy-D-xylulose-5-phosphate synthase from Pseudomonas paraeruginosa (strain DSM 24068 / PA7) (Pseudomonas aeruginosa (strain PA7)).